We begin with the raw amino-acid sequence, 1312 residues long: Rho GTPase-activating protein gacG (1312 aa).

Disordered stretches follow at residues valine 52 to glutamine 74, serine 111 to aspartate 158, isoleucine 314 to phenylalanine 519, asparagine 762 to glycine 831, asparagine 1185 to valine 1230, and threonine 1282 to glutamate 1312. Composition is skewed to low complexity over residues glutamate 53–asparagine 67 and serine 111–arginine 146. Positions asparagine 147 to aspartate 158 are enriched in polar residues. Low complexity-rich tracts occupy residues threonine 328–serine 355, histidine 373–serine 397, and leucine 414–asparagine 436. Residues glutamate 437–arginine 449 are compositionally biased toward polar residues. Low complexity predominate over residues serine 479 to glutamine 507. 2 stretches are compositionally biased toward polar residues: residues histidine 508–asparagine 518 and serine 763–alanine 776. The span at asparagine 792–asparagine 816 shows a compositional bias: low complexity. A Rho-GAP domain is found at serine 1030–asparagine 1212. Residues histidine 1196–arginine 1210 are compositionally biased toward basic residues. Low complexity-rich tracts occupy residues asparagine 1213 to serine 1222 and threonine 1282 to serine 1305.

The protein resides in the cytoplasm. Its function is as follows. Rho GTPase-activating protein involved in the signal transduction pathway. This Dictyostelium discoideum (Social amoeba) protein is Rho GTPase-activating protein gacG (gacG).